Here is a 167-residue protein sequence, read N- to C-terminus: MYKQIEIFTDGSCLGNPGPGGCAGILRYRQYKKEFSAGYHITTNNRMELMAAIIALESLKNSCQIILYSDSQYLLTGITQWIQIWKKHHWKTADSKLVKNIDLWRRLDIAIQPHNIKDWRWLKSHTGHPDNERCDQLARKAAKYPLNKDFDNNPVVLYNDNDLMKID.

Positions 1 to 143 (MYKQIEIFTD…CDQLARKAAK (143 aa)) constitute an RNase H type-1 domain. The Mg(2+) site is built by Asp-10, Glu-48, Asp-70, and Asp-135.

It belongs to the RNase H family. In terms of assembly, monomer. The cofactor is Mg(2+).

It is found in the cytoplasm. It catalyses the reaction Endonucleolytic cleavage to 5'-phosphomonoester.. In terms of biological role, endonuclease that specifically degrades the RNA of RNA-DNA hybrids. This chain is Ribonuclease H, found in Blochmanniella floridana.